A 110-amino-acid chain; its full sequence is MEMTLFLNESYIFHRLRMWSIVLWHSCVFVCAECGNANYRVPRCLIKPFSVPVTFPFSVKKNIRILDLDPRTEAYCLSPYSVCSKRLPCKKYFYLLNSYNIKRVLGVVYC.

It belongs to the UPF0377 family.

The polypeptide is Putative UPF0377 protein YIR040C (Saccharomyces cerevisiae (strain ATCC 204508 / S288c) (Baker's yeast)).